We begin with the raw amino-acid sequence, 312 residues long: Dihydroorotate dehydrogenase B (NAD(+)), catalytic subunit (312 aa).

FMN is bound by residues Ser21 and 45 to 46; that span reads KA. Substrate-binding positions include Lys45 and 69–73; that span reads NAIGL. Positions 99 and 127 each coordinate FMN. Asn127 contributes to the substrate binding site. The Nucleophile role is filled by Cys130. FMN-binding residues include Lys165 and Ile191. Substrate is bound at residue 192–193; sequence NT. Residues Gly217, 243 to 244, and 265 to 266 contribute to the FMN site; these read GG and GT.

This sequence belongs to the dihydroorotate dehydrogenase family. Type 1 subfamily. Heterotetramer of 2 PyrK and 2 PyrD type B subunits. FMN is required as a cofactor.

It is found in the cytoplasm. The catalysed reaction is (S)-dihydroorotate + NAD(+) = orotate + NADH + H(+). It functions in the pathway pyrimidine metabolism; UMP biosynthesis via de novo pathway; orotate from (S)-dihydroorotate (NAD(+) route): step 1/1. Catalyzes the conversion of dihydroorotate to orotate with NAD(+) as electron acceptor. The sequence is that of Dihydroorotate dehydrogenase B (NAD(+)), catalytic subunit (pyrD) from Anoxybacillus flavithermus (strain DSM 21510 / WK1).